The chain runs to 983 residues: Ephrin type-A receptor 3 (983 aa).

The N-terminal stretch at 1–19 is a signal peptide; the sequence is MDRRRLPLLLLCAALGSAG. Residues 20-540 lie on the Extracellular side of the membrane; the sequence is RLSARPGNEV…SFSISSENSQ (521 aa). An Eph LBD domain is found at 28 to 206; that stretch reads EVNLLDSKTI…YFKKCPFTVK (179 aa). Residues Asn-231, Asn-336, Asn-390, Asn-403, and Asn-492 are each glycosylated (N-linked (GlcNAc...) asparagine). Fibronectin type-III domains follow at residues 324–434 and 435–530; these read PPSA…TNQA and APSP…TSPD. Residues 541–564 traverse the membrane as a helical segment; sequence VVMIAISAAVAIILLTVVVYVLIG. Residues 565 to 983 lie on the Cytoplasmic side of the membrane; it reads RFCGYKKSKH…THTKNSPVPV (419 aa). Residues Tyr-596 and Tyr-602 each carry the phosphotyrosine; by autocatalysis modification. The Protein kinase domain occupies 621 to 882; it reads ISIDKVVGAG…QIVSILDKLI (262 aa). ATP is bound by residues 628 to 633, Lys-653, and 700 to 706; these read GAGEFG and EYMENGS. Tyr-701 is modified (phosphotyrosine; by autocatalysis). The Proton acceptor role is filled by Asp-746. 750 to 751 is a binding site for ATP; that stretch reads RN. Tyr-779 is subject to Phosphotyrosine; by autocatalysis. The region spanning 911–975 is the SAM domain; the sequence is SAFRTAGDWL…VSSIKTLETH (65 aa). The short motif at 981-983 is the PDZ-binding element; it reads VPV.

Belongs to the protein kinase superfamily. Tyr protein kinase family. Ephrin receptor subfamily. In terms of assembly, heterotetramer upon binding of the ligand. The heterotetramer is composed of an ephrin dimer and a receptor dimer. Oligomerization is probably required to induce biological responses. Post-translationally, autophosphorylates upon activation by EFNA5. As to expression, highly expressed in the developing brain and embryonic tissues. In adult, the greatest levels of expression occur in the brain. It is expressed in a graded manner across the retina with the highest expression at its temporal pole. Detectable in all other adult tissues examined, except the liver.

The protein resides in the cell membrane. It catalyses the reaction L-tyrosyl-[protein] + ATP = O-phospho-L-tyrosyl-[protein] + ADP + H(+). Receptor tyrosine kinase which binds promiscuously membrane-bound ephrin family ligands residing on adjacent cells, leading to contact-dependent bidirectional signaling into neighboring cells. The signaling pathway downstream of the receptor is referred to as forward signaling while the signaling pathway downstream of the ephrin ligand is referred to as reverse signaling. Highly promiscuous for ephrin-A ligands it binds preferentially EFNA5. Upon activation by EFNA5 regulates cell-cell adhesion, cytoskeletal organization and cell migration. Plays a role in cardiac cells migration and differentiation probably through activation by EFNA1. Involved in the retinotectal mapping of neurons. May also control the segregation but not the guidance of motor and sensory axons during neuromuscular circuit development. The protein is Ephrin type-A receptor 3 (EPHA3) of Gallus gallus (Chicken).